The following is a 284-amino-acid chain: Tropomyosin isoforms a/b/d/f (284 aa).

Positions 1 to 284 form a coiled coil; it reads MDAIKKKMQA…DSTFQELSGY (284 aa). A disordered region spans residues 40–78; sequence EEELRDTQKKMTQTGDDLDKAQEDLSAATSKLEEKEKTV.

It belongs to the tropomyosin family. In terms of tissue distribution, isoform a and isoform d are expressed in body wall muscles, vulva, anus muscles and male tail muscles. Located to the myofibrils of thin actin filaments.

Its subcellular location is the cytoplasm. It localises to the myofibril. It is found in the sarcomere. The protein resides in the i band. Its function is as follows. Tropomyosin, in association with the troponin complex, plays a central role in the calcium dependent regulation of muscle contraction. Involved in muscle actin filament organization and muscle arm extension and morphology. Protects actin filaments from depolymerization by unc-60 in vitro. Also has a role in male mating behavior by regulating the copulatory spicules. Binds to F-actin. This chain is Tropomyosin isoforms a/b/d/f (lev-11), found in Caenorhabditis elegans.